The primary structure comprises 516 residues: L-amino acid oxidase bordonein-L (516 aa).

An N-terminal signal peptide occupies residues 1–18; the sequence is MNVFFMFSLLFLAALGSC. An intrachain disulfide couples C28 to C189. FAD-binding positions include 61–62, 81–82, R89, and 103–106; these read MA, EA, and GPMR. 2 residues coordinate substrate: R106 and H239. V279 provides a ligand contact to FAD. C349 and C430 form a disulfide bridge. The N-linked (GlcNAc...) asparagine glycan is linked to N379. Position 390 (Y390) interacts with substrate. Residues E475 and 482 to 487 contribute to the FAD site; that span reads GWIDST. 482 to 483 is a binding site for substrate; that stretch reads GW.

In terms of assembly, homodimer; non-covalently linked. It depends on FAD as a cofactor. In terms of processing, N-glycosylated. N-glycan probably consists of the disaccharide N-acetylglucosamine-fucose (HexNAc-Fuc). As to expression, expressed by the venom gland.

The protein resides in the secreted. The catalysed reaction is an L-alpha-amino acid + O2 + H2O = a 2-oxocarboxylate + H2O2 + NH4(+). It carries out the reaction L-leucine + O2 + H2O = 4-methyl-2-oxopentanoate + H2O2 + NH4(+). The enzyme catalyses L-phenylalanine + O2 + H2O = 3-phenylpyruvate + H2O2 + NH4(+). It catalyses the reaction L-tryptophan + O2 + H2O = indole-3-pyruvate + H2O2 + NH4(+). The catalysed reaction is L-methionine + O2 + H2O = 4-methylsulfanyl-2-oxobutanoate + H2O2 + NH4(+). It carries out the reaction L-isoleucine + O2 + H2O = (S)-3-methyl-2-oxopentanoate + H2O2 + NH4(+). The enzyme catalyses L-arginine + O2 + H2O = 5-guanidino-2-oxopentanoate + H2O2 + NH4(+). It catalyses the reaction L-histidine + O2 + H2O = 3-(imidazol-5-yl)pyruvate + H2O2 + NH4(+). Its function is as follows. Catalyzes an oxidative deamination of predominantly hydrophobic and aromatic L-amino acids, thus producing hydrogen peroxide that may contribute to the diverse toxic effects of this enzyme. Is highly active on L-Met, L-Leu, L-Trp, and L-Phe, moderately active on L-Ile, L-His, and L-Arg, and weakly or not active on L-Gln, L-Val, L-Asn, L-Ala, L-Lys, L-Ser, L-Thr, L-Pro, L-Asp, L-Gly, L-Tyr, L-Cys and L-Glu. This enzyme exhibits diverse biological activities, such as hemorrhage, hemolysis, edema, apoptosis of vascular endothelial cells or tumor cell lines, antibacterial and antiparasitic activities, as well as regulation of platelet aggregation. Its effect on platelets is controversial, since it either induces aggregation or inhibits agonist-induced aggregation. These different effects are probably due to different experimental conditions. In vitro, the enzyme exhibits cytotoxicity against fibroblast cell line and kills Leishmania amazonensis promastigotes, intensified by substrate addition. This is L-amino acid oxidase bordonein-L from Crotalus durissus terrificus (South American rattlesnake).